The chain runs to 97 residues: HssA/B-like protein 38 (97 aa).

The disordered stretch occupies residues 1–29 (MTLFSSISSISNPMTSSKSSISSFGSGTS).

The protein belongs to the hssA/B family.

In Dictyostelium discoideum (Social amoeba), this protein is HssA/B-like protein 38 (hssl38).